The chain runs to 100 residues: uncharacterized protein (100 aa).

Residues 1–23 form the signal peptide; it reads MKYVALAFVLSLVILQISAQVGA.

Nacreous layer of shell (at protein level). Expressed primarily in the mantle with highest level in the mantle pallium and lower level in the mantle edge.

It localises to the secreted. This is an uncharacterized protein from Margaritifera margaritifera (Freshwater pearl mussel).